Here is a 236-residue protein sequence, read N- to C-terminus: MPPRELSEAEPPPLPASTPPPRRRSAPPELGIKCVLVGDGAVGKSSLIVSYTCNGYPSRYRPTALDTFSVQVLVDGAPVRIELWDTAGQEDFDRLRSLCYPDTDVFLACFSVVQPSSFQNITEKWLPEIRTHNPQAPVLLVGTQADLRDDVNVLIQLDQGGREGPVPEPQAQGLAEKIRACCYLECSALTQKNLKEVFDSAILSAIEHKARLEKKLNAKGVRTLSRCRWKKFFCFV.

A disordered region spans residues 1–28 (MPPRELSEAEPPPLPASTPPPRRRSAPP). Pro residues predominate over residues 10 to 20 (EPPPLPASTPP). At Ser25 the chain carries Phosphoserine. GTP contacts are provided by residues 38–45 (GDGAVGKS), 85–89 (DTAGQ), and 143–146 (TQAD). A lipid anchor (S-palmitoyl cysteine) is attached at Cys234.

Belongs to the small GTPase superfamily. Rho family. Interacts with PAK2. The cofactor is Mg(2+). Highly expressed in brain and testis and at lower levels in spleen and lung.

The protein localises to the cell membrane. It is found in the endosome membrane. Plays a role in the control of the actin cytoskeleton via activation of the JNK pathway. The polypeptide is Rho-related GTP-binding protein RhoV (Rattus norvegicus (Rat)).